Consider the following 550-residue polypeptide: Arginine--tRNA ligase (550 aa).

Residues 130–140 (ANPTGPIHIGG) carry the 'HIGH' region motif.

The protein belongs to the class-I aminoacyl-tRNA synthetase family. Monomer.

The protein resides in the cytoplasm. The catalysed reaction is tRNA(Arg) + L-arginine + ATP = L-arginyl-tRNA(Arg) + AMP + diphosphate. The chain is Arginine--tRNA ligase from Mycolicibacterium paratuberculosis (strain ATCC BAA-968 / K-10) (Mycobacterium paratuberculosis).